The primary structure comprises 370 residues: Cobalt-precorrin-5B C(1)-methyltransferase (370 aa).

It belongs to the CbiD family.

The enzyme catalyses Co-precorrin-5B + S-adenosyl-L-methionine = Co-precorrin-6A + S-adenosyl-L-homocysteine. The protein operates within cofactor biosynthesis; adenosylcobalamin biosynthesis; cob(II)yrinate a,c-diamide from sirohydrochlorin (anaerobic route): step 6/10. Catalyzes the methylation of C-1 in cobalt-precorrin-5B to form cobalt-precorrin-6A. This chain is Cobalt-precorrin-5B C(1)-methyltransferase, found in Pseudomonas savastanoi pv. phaseolicola (strain 1448A / Race 6) (Pseudomonas syringae pv. phaseolicola (strain 1448A / Race 6)).